The primary structure comprises 122 residues: Large ribosomal subunit protein uL14c (122 aa).

It belongs to the universal ribosomal protein uL14 family. As to quaternary structure, part of the 50S ribosomal subunit.

The protein resides in the plastid. The protein localises to the chloroplast. Its function is as follows. Binds to 23S rRNA. The protein is Large ribosomal subunit protein uL14c of Oltmannsiellopsis viridis (Marine flagellate).